Reading from the N-terminus, the 247-residue chain is tRNA pseudouridine synthase A (247 aa).

Residue Asp-52 is the Nucleophile of the active site. Tyr-110 is a binding site for substrate.

Belongs to the tRNA pseudouridine synthase TruA family. In terms of assembly, homodimer.

It catalyses the reaction uridine(38/39/40) in tRNA = pseudouridine(38/39/40) in tRNA. Functionally, formation of pseudouridine at positions 38, 39 and 40 in the anticodon stem and loop of transfer RNAs. The sequence is that of tRNA pseudouridine synthase A from Hyphomonas neptunium (strain ATCC 15444).